Consider the following 391-residue polypeptide: Na(+)/H(+) antiporter NhaA (391 aa).

Helical transmembrane passes span 14–34, 59–79, 95–115, 124–144, 154–174, 177–197, 213–233, 261–281, 290–310, 328–348, and 363–383; these read AGGILLLVAVVFAMLMANSPL, LLLWINDGLMALFFLLIGLEV, SLPSFAAIGGMLVPAGIYLLF, AGWAIPAATDIAFALGIMALL, VFLLALAIIDDLGVIVIIALF, SDLSTISLAIASVAILGLVGL, LILWVAVLKSGVHATLAGVII, FLILPVFAFANAGVALGNMSL, IGIALGLILGKPIGVMLFSFI, IAPVAAMCGIGFTMSMFIASL, and LGTLIGSFIAALVGYFWLSKV.

Belongs to the NhaA Na(+)/H(+) (TC 2.A.33) antiporter family.

It localises to the cell inner membrane. The catalysed reaction is Na(+)(in) + 2 H(+)(out) = Na(+)(out) + 2 H(+)(in). In terms of biological role, na(+)/H(+) antiporter that extrudes sodium in exchange for external protons. This Shewanella putrefaciens (strain CN-32 / ATCC BAA-453) protein is Na(+)/H(+) antiporter NhaA.